Here is a 260-residue protein sequence, read N- to C-terminus: Ribosome maturation factor RimP (260 aa).

The tract at residues 198-260 (QSLGILPPPP…RGDIDPIEGE (63 aa)) is disordered. Composition is skewed to basic and acidic residues over residues 210 to 228 (AKTD…ENGK) and 238 to 254 (NTKE…RGDI).

The protein belongs to the RimP family.

The protein resides in the cytoplasm. In terms of biological role, required for maturation of 30S ribosomal subunits. The chain is Ribosome maturation factor RimP from Nitrobacter winogradskyi (strain ATCC 25391 / DSM 10237 / CIP 104748 / NCIMB 11846 / Nb-255).